Here is a 95-residue protein sequence, read N- to C-terminus: MALDKTTVAKIATLARLDIEEDRMEALAGELSGILDWIEQLAEVDTSGVAAMTSVADLALAWREDAVTDGGYADRVLANAPESQDGCFLVPKVVE.

The protein belongs to the GatC family. As to quaternary structure, heterotrimer of A, B and C subunits.

The catalysed reaction is L-glutamyl-tRNA(Gln) + L-glutamine + ATP + H2O = L-glutaminyl-tRNA(Gln) + L-glutamate + ADP + phosphate + H(+). The enzyme catalyses L-aspartyl-tRNA(Asn) + L-glutamine + ATP + H2O = L-asparaginyl-tRNA(Asn) + L-glutamate + ADP + phosphate + 2 H(+). Functionally, allows the formation of correctly charged Asn-tRNA(Asn) or Gln-tRNA(Gln) through the transamidation of misacylated Asp-tRNA(Asn) or Glu-tRNA(Gln) in organisms which lack either or both of asparaginyl-tRNA or glutaminyl-tRNA synthetases. The reaction takes place in the presence of glutamine and ATP through an activated phospho-Asp-tRNA(Asn) or phospho-Glu-tRNA(Gln). This Rhodospirillum rubrum (strain ATCC 11170 / ATH 1.1.1 / DSM 467 / LMG 4362 / NCIMB 8255 / S1) protein is Aspartyl/glutamyl-tRNA(Asn/Gln) amidotransferase subunit C.